The primary structure comprises 317 residues: N(5)-(carboxyethyl)ornithine synthase (317 aa).

Positions 15, 71, and 92 each coordinate pyruvate. Position 172–177 (172–177 (GSGNVS)) interacts with NADP(+).

The protein belongs to the AlaDH/PNT family. CEOS subfamily. As to quaternary structure, homotetramer.

The catalysed reaction is N(5)-[1(S)-1-carboxyethyl]-L-ornithine + NADP(+) + H2O = L-ornithine + pyruvate + NADPH + H(+). Functionally, catalyzes the NADPH-dependent reductive condensation between pyruvic acid and the side chain amino group of L-ornithine to form N(5)-(L-1-carboxyethyl)-L-ornithine. To a lesser extent, can also use L-lysine as substrate (yielding N(6)-(L-1-carboxyethyl)-L-lysine), and the D-isomers of the 2 basic amino acids. Can use alpha-keto acids other than pyruvate, e.g. glyoxylate. The polypeptide is N(5)-(carboxyethyl)ornithine synthase (ceo) (Clostridium botulinum (strain Hall / ATCC 3502 / NCTC 13319 / Type A)).